We begin with the raw amino-acid sequence, 595 residues long: MFS-type efflux pump MFS2 (595 aa).

The N-linked (GlcNAc...) asparagine glycan is linked to Asn-62. A run of 12 helical transmembrane segments spans residues 69 to 89 (WSIT…SSAY), 106 to 126 (VITL…LIWA), 136 to 156 (LLFF…AGSP), 166 to 186 (FFAG…IADM), 197 to 217 (GIFA…GGFL), 225 to 245 (WVEG…SIFL), 301 to 321 (PIVL…YMLF), 336 to 356 (PGIG…AMVI), 381 to 401 (LPVA…FAWT), 409 to 429 (IVSI…FLSL), 442 to 462 (ASVL…FPLF), and 478 to 498 (IPAF…IYGA).

It belongs to the major facilitator superfamily. DHA1 family. Polyamines/proton antiporter (TC 2.A.1.2.16) subfamily.

It localises to the cell membrane. MFS-type efflux pump involved in the modulation susceptibility to fluconazole and voriconazole, 2 azoles with similar molecular structure. The sequence is that of MFS-type efflux pump MFS2 from Trichophyton rubrum (strain ATCC MYA-4607 / CBS 118892) (Athlete's foot fungus).